Reading from the N-terminus, the 134-residue chain is Arsenate reductase (134 aa).

Active-site nucleophile residues include Cys-11, Cys-83, and Cys-90. Disulfide bonds link Cys-11-Cys-83 and Cys-83-Cys-90.

Belongs to the low molecular weight phosphotyrosine protein phosphatase family. Thioredoxin-coupled ArsC subfamily.

The protein resides in the cytoplasm. The enzyme catalyses arsenate + [thioredoxin]-dithiol + H(+) = arsenite + [thioredoxin]-disulfide + H2O. Catalyzes the reduction of arsenate [As(V)] to arsenite [As(III)]. The chain is Arsenate reductase from Bacillus cereus (strain AH187).